A 204-amino-acid polypeptide reads, in one-letter code: Bombinin-like peptides 1 (204 aa).

A signal peptide (or 18) is located at residues 1–16; sequence MNFKYIVAVSILIASA. Asn70 and Asn133 each carry asparagine amide.

The protein belongs to the bombinin family. As to expression, expressed by the skin glands.

Its subcellular location is the secreted. Its function is as follows. Has antimicrobial activity, but no hemolytic activity. Preference on killing Gram-negative non-enteric bacteria. The sequence is that of Bombinin-like peptides 1 from Bombina orientalis (Oriental fire-bellied toad).